Reading from the N-terminus, the 397-residue chain is Mannosylglycerate synthase (397 aa).

Residues 7 to 11 (PFKHE), Ile35, Gln66, Lys76, Asp100, and 100 to 101 (DA) contribute to the GDP-alpha-D-mannose site. Residue Asp102 coordinates a divalent metal cation. (R)-glycerate-binding positions include Arg131 and 136–139 (AMIT). Residues Leu163 and Asp192 each contribute to the GDP-alpha-D-mannose site. Residue His217 participates in a divalent metal cation binding. Residues Arg218 and Tyr220 each contribute to the GDP-alpha-D-mannose site.

It belongs to the glycosyltransferase 78 family. As to quaternary structure, homotetramer. Dimer of dimers. Requires Mg(2+) as cofactor. The cofactor is Ca(2+). It depends on Mn(2+) as a cofactor. Ni(2+) serves as cofactor. Co(2+) is required as a cofactor.

It catalyses the reaction (R)-glycerate + GDP-alpha-D-mannose = (2R)-2-O-(alpha-D-mannosyl)-glycerate + GDP + H(+). With respect to regulation, inhibited by GDP. Functionally, involved in the biosynthesis of the stress protectant 2-O-alpha-D-mannosyl glycerate (MG) which is produced in response to growth at supraoptimal temperature and salinity, and protects several enzymes against inactivation by temperature, freeze-drying and osmotic stress. Catalyzes the condensation of alpha-GDP-D-mannose (GDP-Man) with D-glycerate to produce alpha-mannosyl-D-glycerate. It is specific for GDP-Man, but it can also use alpha-GDP-D-glucose (GDP-Glc), beta-GDP-D-fructose, alpha-UDP-D-mannose and alpha-UDP-D-glucose as sugar donors. It is specific for D-glycerate, but it can also use D-lactate and glycolate as sugar acceptors. This reaction occurs with a net retention of anomeric configuration; the newly formed glycosidic linkage has the same alpha configuration as the sugar donor. This is Mannosylglycerate synthase (mgs) from Rhodothermus marinus (Rhodothermus obamensis).